A 180-amino-acid chain; its full sequence is Large ribosomal subunit protein uL22 (180 aa).

The interval 111 to 180 (VVVESRPAKD…ETSDAKGGSD (70 aa)) is disordered. The segment covering 142–166 (PAKKAPAKKAPAKKAPAKTAAKKTP) has biased composition (basic residues). Positions 171-180 (ETSDAKGGSD) are enriched in basic and acidic residues.

Belongs to the universal ribosomal protein uL22 family. In terms of assembly, part of the 50S ribosomal subunit.

Functionally, this protein binds specifically to 23S rRNA; its binding is stimulated by other ribosomal proteins, e.g. L4, L17, and L20. It is important during the early stages of 50S assembly. It makes multiple contacts with different domains of the 23S rRNA in the assembled 50S subunit and ribosome. Its function is as follows. The globular domain of the protein is located near the polypeptide exit tunnel on the outside of the subunit, while an extended beta-hairpin is found that lines the wall of the exit tunnel in the center of the 70S ribosome. This Mycobacterium avium (strain 104) protein is Large ribosomal subunit protein uL22.